The primary structure comprises 95 residues: Aspartyl/glutamyl-tRNA(Asn/Gln) amidotransferase subunit C (95 aa).

The protein belongs to the GatC family. As to quaternary structure, heterotrimer of A, B and C subunits.

It catalyses the reaction L-glutamyl-tRNA(Gln) + L-glutamine + ATP + H2O = L-glutaminyl-tRNA(Gln) + L-glutamate + ADP + phosphate + H(+). It carries out the reaction L-aspartyl-tRNA(Asn) + L-glutamine + ATP + H2O = L-asparaginyl-tRNA(Asn) + L-glutamate + ADP + phosphate + 2 H(+). Functionally, allows the formation of correctly charged Asn-tRNA(Asn) or Gln-tRNA(Gln) through the transamidation of misacylated Asp-tRNA(Asn) or Glu-tRNA(Gln) in organisms which lack either or both of asparaginyl-tRNA or glutaminyl-tRNA synthetases. The reaction takes place in the presence of glutamine and ATP through an activated phospho-Asp-tRNA(Asn) or phospho-Glu-tRNA(Gln). The polypeptide is Aspartyl/glutamyl-tRNA(Asn/Gln) amidotransferase subunit C (Ruthia magnifica subsp. Calyptogena magnifica).